The following is a 306-amino-acid chain: Probable dimethyladenosine transferase (306 aa).

Histidine 30, leucine 32, glycine 57, glutamate 78, aspartate 106, and asparagine 121 together coordinate S-adenosyl-L-methionine.

It belongs to the class I-like SAM-binding methyltransferase superfamily. rRNA adenine N(6)-methyltransferase family. As to quaternary structure, part of the small subunit (SSU) processome, composed of more than 70 proteins and the RNA chaperone small nucleolar RNA (snoRNA) U3.

It localises to the nucleus. The protein localises to the nucleolus. It catalyses the reaction adenosine(1779)/adenosine(1780) in 18S rRNA + 4 S-adenosyl-L-methionine = N(6)-dimethyladenosine(1779)/N(6)-dimethyladenosine(1780) in 18S rRNA + 4 S-adenosyl-L-homocysteine + 4 H(+). In terms of biological role, specifically dimethylates two adjacent adenosines in the loop of a conserved hairpin near the 3'-end of 18S rRNA in the 40S particle. Involved in the pre-rRNA processing steps leading to small-subunit rRNA production independently of its RNA-modifying catalytic activity. Part of the small subunit (SSU) processome, first precursor of the small eukaryotic ribosomal subunit. During the assembly of the SSU processome in the nucleolus, many ribosome biogenesis factors, an RNA chaperone and ribosomal proteins associate with the nascent pre-rRNA and work in concert to generate RNA folding, modifications, rearrangements and cleavage as well as targeted degradation of pre-ribosomal RNA by the RNA exosome. In Drosophila melanogaster (Fruit fly), this protein is Probable dimethyladenosine transferase.